The following is a 674-amino-acid chain: DNA ligase (674 aa).

NAD(+)-binding positions include 34–38, 84–85, and glutamate 116; these read DAEYD and SL. Lysine 118 acts as the N6-AMP-lysine intermediate in catalysis. NAD(+) is bound by residues arginine 139, glutamate 174, lysine 291, and lysine 315. 4 residues coordinate Zn(2+): cysteine 409, cysteine 412, cysteine 425, and cysteine 430. A BRCT domain is found at 586-674; that stretch reads REGEALKGLT…TGKDPRALTA (89 aa).

Belongs to the NAD-dependent DNA ligase family. LigA subfamily. Mg(2+) is required as a cofactor. Requires Mn(2+) as cofactor.

It catalyses the reaction NAD(+) + (deoxyribonucleotide)n-3'-hydroxyl + 5'-phospho-(deoxyribonucleotide)m = (deoxyribonucleotide)n+m + AMP + beta-nicotinamide D-nucleotide.. DNA ligase that catalyzes the formation of phosphodiester linkages between 5'-phosphoryl and 3'-hydroxyl groups in double-stranded DNA using NAD as a coenzyme and as the energy source for the reaction. It is essential for DNA replication and repair of damaged DNA. This is DNA ligase from Thermus sp. (strain AK16D).